A 372-amino-acid polypeptide reads, in one-letter code: Glutamate 5-kinase (372 aa).

An ATP-binding site is contributed by Lys-14. Substrate contacts are provided by Ser-54, Asp-141, and Asn-153. 173–174 (TD) provides a ligand contact to ATP. Residues 280–358 (RGHVVIDAGA…GEIEAVLGYM (79 aa)) form the PUA domain.

This sequence belongs to the glutamate 5-kinase family.

The protein localises to the cytoplasm. It catalyses the reaction L-glutamate + ATP = L-glutamyl 5-phosphate + ADP. It participates in amino-acid biosynthesis; L-proline biosynthesis; L-glutamate 5-semialdehyde from L-glutamate: step 1/2. Catalyzes the transfer of a phosphate group to glutamate to form L-glutamate 5-phosphate. The sequence is that of Glutamate 5-kinase from Burkholderia thailandensis (strain ATCC 700388 / DSM 13276 / CCUG 48851 / CIP 106301 / E264).